Consider the following 275-residue polypeptide: Small ribosomal subunit protein uS2 (275 aa).

Positions A226–E275 are disordered. The segment covering A264–E275 has biased composition (low complexity).

It belongs to the universal ribosomal protein uS2 family.

This Xanthomonas campestris pv. campestris (strain 8004) protein is Small ribosomal subunit protein uS2.